The following is a 157-amino-acid chain: Protein SINE4 (157 aa).

Positions 104–157 constitute a KASH domain; it reads VTSSSDTTKAKKKTTIRRFVSVTMVLLLSWVLVVLMNHFDHLSMNTQIITLVPT. The chain crosses the membrane as a helical span at residues 122–142; it reads FVSVTMVLLLSWVLVVLMNHF. The short motif at 154 to 157 is the Required for nuclear localization element; that stretch reads LVPT.

As to quaternary structure, interacts with SUN1 and SUN2.

It localises to the nucleus membrane. This chain is Protein SINE4, found in Arabidopsis thaliana (Mouse-ear cress).